The chain runs to 937 residues: Lysosomal alpha-glucosidase (937 aa).

Positions 1–23 (MMRWPPCSRPLLGVCTLLSLALL) are cleaved as a signal peptide. Positions 24–60 (GHILLHDLEVVPRELRGFSQDEIHQACQPGASSPECR) are excised as a propeptide. The region spanning 68 to 118 (TQCDLPPNSRFDCAPDKGITPQQCEARGCCYMPAEWPPDAQMGQPWCFFPP) is the P-type domain. Intrachain disulfides connect C70/C97, C80/C96, and C91/C114. N-linked (GlcNAc...) asparagine glycosylation is found at N127, N220, N259, and N377. Residue D391 participates in substrate binding. N457 carries N-linked (GlcNAc...) asparagine glycosylation. D505 functions as the Nucleophile in the catalytic mechanism. E508 is an active-site residue. C520 and C545 are disulfide-bonded. Substrate-binding residues include R587 and D603. Residues C634 and C645 are joined by a disulfide bond. N-linked (GlcNAc...) asparagine glycosylation is present at N639. A substrate-binding site is contributed by H661. N867, N888, and N910 each carry an N-linked (GlcNAc...) asparagine glycan.

This sequence belongs to the glycosyl hydrolase 31 family.

The protein localises to the lysosome. Its subcellular location is the lysosome membrane. It catalyses the reaction Hydrolysis of terminal, non-reducing (1-&gt;4)-linked alpha-D-glucose residues with release of alpha-D-glucose.. In terms of biological role, essential for the degradation of glycogen in lysosomes. Has highest activity on alpha-1,4-linked glycosidic linkages, but can also hydrolyze alpha-1,6-linked glucans. The polypeptide is Lysosomal alpha-glucosidase (GAA) (Bos taurus (Bovine)).